Reading from the N-terminus, the 60-residue chain is Large ribosomal subunit protein uL30 (60 aa).

It belongs to the universal ribosomal protein uL30 family. As to quaternary structure, part of the 50S ribosomal subunit.

This Acidothermus cellulolyticus (strain ATCC 43068 / DSM 8971 / 11B) protein is Large ribosomal subunit protein uL30.